Reading from the N-terminus, the 943-residue chain is Coiled-coil and C2 domain-containing protein 1A (943 aa).

Residue T91 is modified to Phosphothreonine. Disordered stretches follow at residues 186-250 (NEAD…CSPL) and 300-337 (DLSRLPPPPDQLSPEPPLPAAQPLTSASTLTRPEVPQP). 2 stretches are compositionally biased toward low complexity: residues 195 to 206 (ASGKGAAAGHSH) and 229 to 238 (APSTTTPTSA). Phosphoserine is present on S248. A compositionally biased stretch (pro residues) spans 304 to 319 (LPPPPDQLSPEPPLPA). Residues 339–385 (RNLLEALEQRMERYHVAAAQAKAKGDQRKARMHERIVKQYQDAIRAH) adopt a coiled-coil conformation. The interval 430–483 (NHDEGSDDEEEETPKKQNTPAASTTQLKSSPSKAPPSGPAPAGKAAPKGTSNRA) is disordered. S435 carries the phosphoserine modification. A compositionally biased stretch (polar residues) spans 445–456 (KQNTPAASTTQL). The segment covering 469 to 478 (APAGKAAPKG) has biased composition (low complexity). Residues 477 to 510 (KGTSNRAQQQLAFLEGRKKQLLQAALRAKQKNDV) adopt a coiled-coil conformation. A C2 domain is found at 630–764 (RFEQRTFSVI…ETACEVHEIL (135 aa)).

It belongs to the CC2D1 family. Highly expressed in brain, expression is enriched in the gray matter and strongest in the olfactory bulb.

The protein resides in the cytoplasm. It is found in the nucleus. It localises to the cytoskeleton. The protein localises to the microtubule organizing center. Its subcellular location is the centrosome. In terms of biological role, transcription factor that binds specifically to the DRE (dual repressor element) and represses HTR1A gene transcription in neuronal cells. The combination of calcium and ATP specifically inactivates the binding with FRE. May play a role in the altered regulation of HTR1A associated with anxiety and major depression. Mediates HDAC-independent repression of HTR1A promoter in neuronal cell. Performs essential function in controlling functional maturation of synapses. In Mus musculus (Mouse), this protein is Coiled-coil and C2 domain-containing protein 1A (Cc2d1a).